We begin with the raw amino-acid sequence, 438 residues long: MPIAKVHARSVYVSRGNPTVEVDVVTETGLHRAIVPSGASTGQHEAVELRDGDKAKWGGKGVLKAVKNVNETIGPALIKENIDVKDQAKVDEFLNKLDGTANKGNLGANAILGVSLAIAKAAAAEKGVPLYVHISDLAGTKKPYVLPVPFQNVLNGGSHAGGRLAFQEFMIVPDTAESFSEGLRQGAEVYQKLKALAKKKYGQSAGNVGDEGGVAPDIQTAEEALDLITEAIEQAGYTGKISIAMDVASSEFYKTDAKKYDLDFKNPDSDPTKWLTYEQLADLYKSLAAKYPIVSIEDPFAEDDWEAWSYFYKTSDFQIVGDDLTVTNPLRIKKAIELKSCNALLLKVNQIGTLTESIQAAKDSYADNWGVMVSHRSGETEDVTIADIAVGLRSGQIKTGAPARSERLAKLNQILRIEEELGENAIYAGKNFRTSVNL.

Positions 159 and 168 each coordinate substrate. Glu211 (proton donor) is an active-site residue. The Mg(2+) site is built by Asp246, Glu297, and Asp322. The substrate site is built by Glu297 and Asp322. Catalysis depends on Lys347, which acts as the Proton acceptor. Substrate contacts are provided by residues 374 to 377 (SHRS) and Lys398.

It belongs to the enolase family. As to quaternary structure, homodimer. Requires Mg(2+) as cofactor.

The protein resides in the cytoplasm. The catalysed reaction is (2R)-2-phosphoglycerate = phosphoenolpyruvate + H2O. The protein operates within carbohydrate degradation; glycolysis; pyruvate from D-glyceraldehyde 3-phosphate: step 4/5. The sequence is that of Enolase (enoA) from Penicillium citrinum.